The sequence spans 521 residues: Glutamate--tRNA ligase (521 aa).

The 'HIGH' region signature appears at 30–40 (PSPTGYLHVGG). The 'KMSKS' region motif lies at 277-281 (KLSKR). An ATP-binding site is contributed by Lys-280.

This sequence belongs to the class-I aminoacyl-tRNA synthetase family. Glutamate--tRNA ligase type 1 subfamily. Monomer.

The protein resides in the cytoplasm. It catalyses the reaction tRNA(Glu) + L-glutamate + ATP = L-glutamyl-tRNA(Glu) + AMP + diphosphate. In terms of biological role, catalyzes the attachment of glutamate to tRNA(Glu) in a two-step reaction: glutamate is first activated by ATP to form Glu-AMP and then transferred to the acceptor end of tRNA(Glu). This chain is Glutamate--tRNA ligase, found in Chlorobium phaeovibrioides (strain DSM 265 / 1930) (Prosthecochloris vibrioformis (strain DSM 265)).